Reading from the N-terminus, the 229-residue chain is Potassium/proton antiporter CemA (229 aa).

A run of 2 helical transmembrane segments spans residues 7 to 27 and 106 to 126; these read LASL…SISF and IISH…YFIL.

The protein belongs to the CemA family.

Its subcellular location is the plastid. It localises to the chloroplast inner membrane. It catalyses the reaction K(+)(in) + H(+)(out) = K(+)(out) + H(+)(in). In terms of biological role, contributes to K(+)/H(+) antiport activity by supporting proton efflux to control proton extrusion and homeostasis in chloroplasts in a light-dependent manner to modulate photosynthesis. Prevents excessive induction of non-photochemical quenching (NPQ) under continuous-light conditions. Indirectly promotes efficient inorganic carbon uptake into chloroplasts. This Cycas taitungensis (Prince sago) protein is Potassium/proton antiporter CemA.